The chain runs to 335 residues: DNA polymerase beta (335 aa).

Lys-41 is covalently cross-linked (Glycyl lysine isopeptide (Lys-Gly) (interchain with G-Cter in ubiquitin)). Residue Lys-60 coordinates K(+). Lys-60 provides a ligand contact to Na(+). Lys-61 is covalently cross-linked (Glycyl lysine isopeptide (Lys-Gly) (interchain with G-Cter in ubiquitin)). K(+) is bound by residues Leu-62 and Val-65. Na(+) is bound by residues Leu-62 and Val-65. The active-site Nucleophile; Schiff-base intermediate with DNA; for 5'-dRP lyase activity is Lys-72. Residue Lys-72 is modified to N6-acetyllysine. Lys-81 participates in a covalent cross-link: Glycyl lysine isopeptide (Lys-Gly) (interchain with G-Cter in ubiquitin). Arg-83 bears the Omega-N-methylarginine; by PRMT6 mark. Residues Thr-101, Val-103, and Ile-106 each coordinate K(+). Thr-101, Val-103, and Ile-106 together coordinate Na(+). A 2'-deoxyribonucleoside 5'-triphosphate is bound at residue Arg-149. Arg-152 is modified (omega-N-methylarginine; by PRMT6). A 2'-deoxyribonucleoside 5'-triphosphate contacts are provided by Ser-180, Arg-183, Gly-189, and Asp-190. The tract at residues 183–192 (RGAESSGDMD) is DNA-binding. Asp-190, Asp-192, and Asp-256 together coordinate Mg(2+).

The protein belongs to the DNA polymerase type-X family. Monomer. Binds single-stranded DNA (ssDNA). Interacts with APEX1, LIG1, LIG3, FEN1, PCNA and XRCC1. Interacts with HUWE1/ARF-BP1, STUB1/CHIP and USP47. Interacts with FAM168A. Mg(2+) is required as a cofactor. Post-translationally, methylation by PRMT6 stimulates the polymerase activity by enhancing DNA binding and processivity. Ubiquitinated at Lys-41, Lys-61 and Lys-81: monoubiquitinated by HUWE1/ARF-BP1. Monoubiquitinated protein is then the target of STUB1/CHIP, which catalyzes polyubiquitination from monoubiquitin, leading to degradation by the proteasome. USP47 mediates the deubiquitination of monoubiquitinated protein, preventing polyubiquitination by STUB1/CHIP and its subsequent degradation.

It localises to the nucleus. The protein localises to the cytoplasm. The catalysed reaction is DNA(n) + a 2'-deoxyribonucleoside 5'-triphosphate = DNA(n+1) + diphosphate. It carries out the reaction a 5'-end 2'-deoxyribose-2'-deoxyribonucleotide-DNA = (2E,4S)-4-hydroxypenten-2-al-5-phosphate + a 5'-end 5'-phospho-2'-deoxyribonucleoside-DNA + H(+). It catalyses the reaction 2'-deoxyribonucleotide-(2'-deoxyribose 5'-phosphate)-2'-deoxyribonucleotide-DNA = a 3'-end 2'-deoxyribonucleotide-(2,3-dehydro-2,3-deoxyribose 5'-phosphate)-DNA + a 5'-end 5'-phospho-2'-deoxyribonucleoside-DNA + H(+). Repair polymerase that plays a key role in base-excision repair. During this process, the damaged base is excised by specific DNA glycosylases, the DNA backbone is nicked at the abasic site by an apurinic/apyrimidic (AP) endonuclease, and POLB removes 5'-deoxyribose-phosphate from the preincised AP site acting as a 5'-deoxyribose-phosphate lyase (5'-dRP lyase); through its DNA polymerase activity, it adds one nucleotide to the 3' end of the arising single-nucleotide gap. Conducts 'gap-filling' DNA synthesis in a stepwise distributive fashion rather than in a processive fashion as for other DNA polymerases. It is also able to cleave sugar-phosphate bonds 3' to an intact AP site, acting as an AP lyase. This is DNA polymerase beta (Polb) from Mus musculus (Mouse).